Reading from the N-terminus, the 110-residue chain is MSAIEVTADAASTWDWPLQHNDGVVKVHNTKEKFEVGLDVQFFTPKEIEVKVSGQELLIHCRHETRSDNHGTVAREINRAYKLPDDVDVSTVKSHLATRGVLTITASKKA.

Residues 15–110 (DWPLQHNDGV…VLTITASKKA (96 aa)) form the sHSP domain.

The protein belongs to the small heat shock protein (HSP20) family.

This chain is Heat shock protein Hsp-12.2 (hsp-12.2), found in Caenorhabditis elegans.